The primary structure comprises 712 residues: Dynamin-1-like protein drp-1 (712 aa).

In terms of domain architecture, Dynamin-type G spans 24–304 (QIQLPQIVVV…LMHHIRNCLP (281 aa)). The segment at 34–41 (GSQSAGKS) is G1 motif. A G2 motif region spans residues 60–62 (VTR). The tract at residues 148–151 (DLPG) is G3 motif. Positions 217 to 220 (TKLD) are G4 motif. The segment at 247–250 (VNRS) is G5 motif. Residues 280–502 (SRNGTPYLAK…LAYINTKHPE (223 aa)) form an interaction with caspase ced-9 region. Residues 523–542 (GRSRNRHASTGERAVSAHGE) form a disordered region. Residues 620–711 (VAIIERLIRN…IISEVRETQV (92 aa)) form the GED domain.

This sequence belongs to the TRAFAC class dynamin-like GTPase superfamily. Dynamin/Fzo/YdjA family. As to quaternary structure, interacts (via residues 280-502) with caspase ced-9; the interaction is enhanced by GTP rather than GDP; the interaction is probably direct and may occur at the mitochondrion. Highly expressed in neurons, in intestinal cells and in the body wall, pharyngeal, and vulval muscles.

The protein resides in the mitochondrion. The protein localises to the mitochondrion outer membrane. Its subcellular location is the cytoplasm. It is found in the cytosol. The enzyme catalyses GTP + H2O = GDP + phosphate + H(+). GTPase activity is increased by binding to phospholipid membranes. Its function is as follows. Functions in mitochondrial division. Functions in peroxisomal division. Mediates membrane fission, perhaps mainly of the mitochondrial outer membrane. Mitochondrial fission may be promoted by recruitment to mitochondrial membranes via the egl-1/ced-9 complex. Involved in the coordination of mitochondrial division with autophagy in response to acute heat stress during larval development. Plays a role in apoptosis by promoting mitochondrial elimination and cell-death execution, acting downstream of caspase ced-3, and perhaps independently of FIS1-related protein fis-2, caspase ced-9 and apoptosis-inducing factor AIFM/wah-1. Role in promoting apoptosis dependent upon cleavage of drp-1 by ced-3. Involved in negatively modulating longevity in concert with the Insulin/IGF-1-like signaling (IIS) mediated pathway. The polypeptide is Dynamin-1-like protein drp-1 (Caenorhabditis elegans).